Here is a 333-residue protein sequence, read N- to C-terminus: Probable tRNA-dihydrouridine synthase 1 (333 aa).

FMN is bound by residues Pro17–Ala19 and Gln71. Catalysis depends on Cys102, which acts as the Proton donor. Residues Lys141, Asn202–Asp204, and Gly226–Arg227 each bind FMN.

It belongs to the Dus family. Requires FMN as cofactor.

The enzyme catalyses a 5,6-dihydrouridine in tRNA + NAD(+) = a uridine in tRNA + NADH + H(+). It carries out the reaction a 5,6-dihydrouridine in tRNA + NADP(+) = a uridine in tRNA + NADPH + H(+). Functionally, catalyzes the synthesis of 5,6-dihydrouridine (D), a modified base found in the D-loop of most tRNAs, via the reduction of the C5-C6 double bond in target uridines. The chain is Probable tRNA-dihydrouridine synthase 1 (dus1) from Bacillus subtilis (strain 168).